The sequence spans 149 residues: Large ribosomal subunit protein bL9 (149 aa).

The protein belongs to the bacterial ribosomal protein bL9 family.

Functionally, binds to the 23S rRNA. The sequence is that of Large ribosomal subunit protein bL9 from Legionella pneumophila (strain Paris).